Consider the following 334-residue polypeptide: Glyceraldehyde-3-phosphate dehydrogenase (334 aa).

Residues 12–13 (RI), aspartate 37, arginine 81, and serine 123 each bind NAD(+). Residues 153 to 155 (SCT) and threonine 184 contribute to the D-glyceraldehyde 3-phosphate site. The active-site Nucleophile is cysteine 154. Position 185 (asparagine 185) interacts with NAD(+). D-glyceraldehyde 3-phosphate contacts are provided by residues arginine 199, 212 to 213 (TG), and arginine 235. Position 314 (asparagine 314) interacts with NAD(+).

The protein belongs to the glyceraldehyde-3-phosphate dehydrogenase family. In terms of assembly, homotetramer.

It is found in the cytoplasm. The catalysed reaction is D-glyceraldehyde 3-phosphate + phosphate + NAD(+) = (2R)-3-phospho-glyceroyl phosphate + NADH + H(+). It functions in the pathway carbohydrate degradation; glycolysis; pyruvate from D-glyceraldehyde 3-phosphate: step 1/5. In terms of biological role, catalyzes the oxidative phosphorylation of glyceraldehyde 3-phosphate (G3P) to 1,3-bisphosphoglycerate (BPG) using the cofactor NAD. The first reaction step involves the formation of a hemiacetal intermediate between G3P and a cysteine residue, and this hemiacetal intermediate is then oxidized to a thioester, with concomitant reduction of NAD to NADH. The reduced NADH is then exchanged with the second NAD, and the thioester is attacked by a nucleophilic inorganic phosphate to produce BPG. This Pseudomonas aeruginosa (strain ATCC 15692 / DSM 22644 / CIP 104116 / JCM 14847 / LMG 12228 / 1C / PRS 101 / PAO1) protein is Glyceraldehyde-3-phosphate dehydrogenase (gap).